A 784-amino-acid chain; its full sequence is Probable phosphoketolase (784 aa).

It belongs to the XFP family. Thiamine diphosphate serves as cofactor.

In Rhodopseudomonas palustris (strain HaA2), this protein is Probable phosphoketolase.